We begin with the raw amino-acid sequence, 476 residues long: Bifunctional protein HldE (476 aa).

The segment at 1–319 is ribokinase; sequence MKVSLPAFEK…EALALHHGES (319 aa). 195–198 lines the ATP pocket; sequence NMSE. Aspartate 264 is a catalytic residue. The tract at residues 345 to 476 is cytidylyltransferase; that stretch reads MTNGCFDILH…AIIQNIMANQ (132 aa).

This sequence in the N-terminal section; belongs to the carbohydrate kinase PfkB family. The protein in the C-terminal section; belongs to the cytidylyltransferase family. In terms of assembly, homodimer.

It catalyses the reaction D-glycero-beta-D-manno-heptose 7-phosphate + ATP = D-glycero-beta-D-manno-heptose 1,7-bisphosphate + ADP + H(+). It carries out the reaction D-glycero-beta-D-manno-heptose 1-phosphate + ATP + H(+) = ADP-D-glycero-beta-D-manno-heptose + diphosphate. Its pathway is nucleotide-sugar biosynthesis; ADP-L-glycero-beta-D-manno-heptose biosynthesis; ADP-L-glycero-beta-D-manno-heptose from D-glycero-beta-D-manno-heptose 7-phosphate: step 1/4. It functions in the pathway nucleotide-sugar biosynthesis; ADP-L-glycero-beta-D-manno-heptose biosynthesis; ADP-L-glycero-beta-D-manno-heptose from D-glycero-beta-D-manno-heptose 7-phosphate: step 3/4. Catalyzes the phosphorylation of D-glycero-D-manno-heptose 7-phosphate at the C-1 position to selectively form D-glycero-beta-D-manno-heptose-1,7-bisphosphate. Functionally, catalyzes the ADP transfer from ATP to D-glycero-beta-D-manno-heptose 1-phosphate, yielding ADP-D-glycero-beta-D-manno-heptose. The polypeptide is Bifunctional protein HldE (Shewanella baltica (strain OS185)).